A 433-amino-acid chain; its full sequence is Ribulose bisphosphate carboxylase/oxygenase activase, chloroplastic (433 aa).

The segment covering M1–S20 has biased composition (polar residues). The transit peptide at M1–A53 directs the protein to the chloroplast. The segment at M1–K60 is disordered. Residue G161–S168 coordinates ATP.

It belongs to the RuBisCO activase family.

Its subcellular location is the plastid. The protein resides in the chloroplast stroma. In terms of biological role, activation of RuBisCO (ribulose-1,5-bisphosphate carboxylase/oxygenase; EC 4.1.1.39) involves the ATP-dependent carboxylation of the epsilon-amino group of lysine leading to a carbamate structure. The sequence is that of Ribulose bisphosphate carboxylase/oxygenase activase, chloroplastic (RCA1) from Zea mays (Maize).